A 216-amino-acid chain; its full sequence is Orotidine 5'-phosphate decarboxylase (216 aa).

Substrate-binding positions include aspartate 12, lysine 34, 62-71 (DFKVADIDAT), serine 119, 172-182 (PGVGFQGGNAK), glycine 194, and arginine 195. Lysine 64 acts as the Proton donor in catalysis.

It belongs to the OMP decarboxylase family. Type 1 subfamily. As to quaternary structure, homodimer.

The catalysed reaction is orotidine 5'-phosphate + H(+) = UMP + CO2. It functions in the pathway pyrimidine metabolism; UMP biosynthesis via de novo pathway; UMP from orotate: step 2/2. Catalyzes the decarboxylation of orotidine 5'-monophosphate (OMP) to uridine 5'-monophosphate (UMP). This is Orotidine 5'-phosphate decarboxylase from Methanosphaera stadtmanae (strain ATCC 43021 / DSM 3091 / JCM 11832 / MCB-3).